The chain runs to 178 residues: Photosystem II extrinsic protein V (178 aa).

The signal sequence occupies residues 1–38; it reads MFSKFFSLQKAFAAARRRLLILILVLGMAGYAWGPALA. Positions 71, 74, 75, and 126 each coordinate heme c.

This sequence belongs to the cytochrome c family. PsbV subfamily. PSII is composed of 1 copy each of membrane proteins PsbA, PsbB, PsbC, PsbD, PsbE, PsbF, PsbH, PsbI, PsbJ, PsbK, PsbL, PsbM, PsbT, PsbX, PsbY, PsbZ, Psb30/Ycf12, peripheral proteins PsbO, CyanoQ (PsbQ), PsbU, PsbV and a large number of cofactors. It forms dimeric complexes. Requires heme c as cofactor.

Its subcellular location is the cellular thylakoid membrane. One of the extrinsic, lumenal subunits of photosystem II (PSII). PSII is a light-driven water plastoquinone oxidoreductase, using light energy to abstract electrons from H(2)O, generating a proton gradient subsequently used for ATP formation. The extrinsic proteins stabilize the structure of photosystem II oxygen-evolving complex (OEC), the ion environment of oxygen evolution and protect the OEC against heat-induced inactivation. Low-potential cytochrome c that plays a role in the OEC of PSII. This Synechococcus sp. (strain JA-3-3Ab) (Cyanobacteria bacterium Yellowstone A-Prime) protein is Photosystem II extrinsic protein V.